Consider the following 63-residue polypeptide: MVQRCLVVALLVVVVAAALCSAQLNFTPNWGTGKRDAGDYGDPYSFLYRLIQAEARKMSGCSN.

A signal peptide spans 1-22; it reads MVQRCLVVALLVVVVAAALCSA. Pyrrolidone carboxylic acid is present on glutamine 23. A Threonine amide modification is found at threonine 32.

The protein belongs to the AKH/HRTH/RPCH family. As to quaternary structure, adipokinetic hormone precursor-related peptide (APRP) can form three type of disulfide-bond dimers: p1 (alpha-alpha), p2 (alpha-beta), and p3 (beta-beta).

The protein resides in the secreted. Its function is as follows. This hormone, released from cells in the corpora cardiaca, causes release of diglycerides from the fat body and stimulation of muscles to use these diglycerides as an energy source during energy-demanding processes. The chain is Adipokinetic prohormone type 1 from Schistocerca nitens (Vagrant locust).